A 1139-amino-acid polypeptide reads, in one-letter code: MSRRFTVTSLPPAASAASADPESRRHSVADPRRLPREDVKGDGNPKESSPFINSTDTEKGREYDGRNMALFEEEMDTSPMVSSLLSGLANYTNLPQGSKEHEEAENNEGGKKKPVQAPRMGTFMGVYLPCLQNIFGVILFLRLTWVVGIAGIMESFCMVFICCSCTMLTAISMSAIATNGVVPAGGSYYMISRSLGPEFGGAVGLCFYLGTTFAGAMYILGTIEILLAYLFPAMAIFKAEDASGEAAAMLNNMRVYGTCVLTCMATVVFVGVKYVNKFALVFLGCVILSILAIYAGVIKSAFDPPNFPICLLGNRTLSRHGFDVCAKLAWEGNETVTTRLWGLFCSSRLLNATCDEYFTRNNVTEIQGIPGAASGLIKENLWSSYLTKGVIVERRGMPSVGLADGTPVDMDHPYVFSDMTSYFTLLVGIYFPSVTGIMAGSNRSGDLRDAQKSIPTGTILAIATTSAVYISSVVLFGACIEGVVLRDKFGEAVNGNLVVGTLAWPSPWVIVIGSFFSTCGAGLQSLTGAPRLLQAISRDGIVPFLQVFGHGKANGEPTWALLLTACICEIGILIASLDEVAPILSMFFLMCYMFVNLACAVQTLLRTPNWRPRFRYYHWTLSFLGMSLCLALMFICSWYYALVAMLIAGLIYKYIEYRGAEKEWGDGIRGLSLSAARYALLRLEEGPPHTKNWRPQLLVLVRVDQDQNVVHPQLLSLTSQLKAGKGLTIVGSVLEGTFLDNHPQAQRAEESIRRLMEAEKVKGFCQVVISSNLRDGVSHLIQSGGLGGLQHNTVLVGWPRNWRQKEDHQTWRNFIELVRETTAGHLALLVTKNVSMFPGNPERFSEGSIDVWWIVHDGGMLMLLPFLLRHHKVWRKCKMRIFTVAQMDDNSIQMKKDLTTFLYHLRITAEVEVVEMHESDISAYTYEKTLVMEQRSQILKQMHLTKNEREREIQSITDESRGSIRRKNPANTRLRLNVPEETACDNEEKPEEEVQLIHDQSAPSCPSSSPSPGEEPEGEGETDPEKVHLTWTKDKSAAQKNKGPSPVSSEGIKDFFSMKPEWENLNQSNVRRMHTAVRLNEVIVNKSRDAKLVLLNMPGPPRNRNGDENYMEFLEVLTEQLDRVMLVRGGGREVITIYS.

2 disordered regions span residues 1–62 (MSRR…KGRE) and 95–116 (PQGSKEHEEAENNEGGKKKPVQ). The Cytoplasmic portion of the chain corresponds to 1 to 98 (MSRRFTVTSL…ANYTNLPQGS (98 aa)). A compositionally biased stretch (basic and acidic residues) spans 21–45 (PESRRHSVADPRRLPREDVKGDGNP). Over residues 46 to 55 (KESSPFINST) the composition is skewed to polar residues. T57 is modified (phosphothreonine). Over residues 98-111 (SKEHEEAENNEGGK) the composition is skewed to basic and acidic residues. Residues 99–120 (KEHEEAENNEGGKKKPVQAPRM) form a discontinuously helical membrane-spanning segment. K113 provides a ligand contact to K(+). Residues 121–129 (GTFMGVYLP) lie on the Extracellular side of the membrane. The chain crosses the membrane as a helical span at residues 130-151 (CLQNIFGVILFLRLTWVVGIAG). Over 152–174 (IMESFCMVFICCSCTMLTAISMS) the chain is Cytoplasmic. A helical transmembrane segment spans residues 175-203 (AIATNGVVPAGGSYYMISRSLGPEFGGAV). A184 contributes to the chloride binding site. Residues 204–229 (GLCFYLGTTFAGAMYILGTIEILLAY) are Extracellular-facing. The next 2 membrane-spanning stretches (helical) occupy residues 230–250 (LFPAMAIFKAEDASGEAAAML) and 251–276 (NNMRVYGTCVLTCMATVVFVGVKYVN). The Extracellular segment spans residues 277–402 (KFALVFLGCV…ERRGMPSVGL (126 aa)). C310 and C325 are disulfide-bonded. N-linked (GlcNAc...) asparagine glycosylation is found at N314, N333, N351, and N362. C345 and C354 are joined by a disulfide. The helical transmembrane segment at 403-420 (ADGTPVDMDHPYVFSDMT) threads the bilayer. M410 contacts K(+). Residues Y414 and V415 each contribute to the chloride site. Over 421-429 (SYFTLLVGI) the chain is Cytoplasmic. The helical transmembrane segment at 430–453 (YFPSVTGIMAGSNRSGDLRDAQKS) threads the bilayer. D446 serves as a coordination point for K(+). Residues 454–485 (IPTGTILAIATTSAVYISSVVLFGACIEGVVL) lie on the Extracellular side of the membrane. Residues 486–513 (RDKFGEAVNGNLVVGTLAWPSPWVIVIG) traverse the membrane as a helical segment. Residues 514 to 534 (SFFSTCGAGLQSLTGAPRLLQ) are Cytoplasmic-facing. A run of 2 helical transmembrane segments spans residues 535–555 (AISRDGIVPFLQVFGHGKANG) and 556–578 (EPTWALLLTACICEIGILIASLD). Position 569 (E569) interacts with chloride. The Cytoplasmic portion of the chain corresponds to 579–592 (EVAPILSMFFLMCY). A run of 2 helical transmembrane segments spans residues 593 to 615 (MFVNLACAVQTLLRTPNWRPRFR) and 616 to 632 (YYHWTLSFLGMSLCLAL). The Cytoplasmic segment spans residues 633-1139 (MFICSWYYAL…GGREVITIYS (507 aa)). The interval 667–681 (GIRGLSLSAARYALL) is scissor helix. T929 carries the post-translational modification Phosphothreonine; by OXSR1 and STK39. The tract at residues 943–1025 (HLTKNERERE…PEGEGETDPE (83 aa)) is disordered. Positions 945–962 (TKNEREREIQSITDESRG) are enriched in basic and acidic residues. Residues 982–994 (TACDNEEKPEEEV) show a composition bias toward acidic residues. Residues 1003–1012 (PSCPSSSPSP) are compositionally biased toward low complexity. At T1030 the chain carries Phosphothreonine; by OXSR1 and STK39. Positions 1033–1052 (KDKSAAQKNKGPSPVSSEGI) are disordered. 3 positions are modified to phosphoserine: S1045, S1048, and S1049.

This sequence belongs to the SLC12A transporter family. K/Cl co-transporter subfamily. In terms of assembly, homodimer; adopts a domain-swap conformation at the scissor helices connecting the transmembrane domain and C-terminal domain. Heterodimer wHeterodimer with K-Cl cotransporters SLC12A6 and SLC12A7. Interacts with AP2A1. Phosphorylated at Thr-929 and Thr-1030 by OXSR1/OSR1 and STK39/SPAK downstream of WNK kinases (WNK1, WNK2, WNK3 or WNK4), inhibiting the potassium-chloride cotransport activity. In terms of tissue distribution, highly expressed in brain. Not detected in other tissues. Highly expressed in pyramidal neurons and in neurons throughout the cortex, hippocampus, the granular layer of the cerebellum and in groups of neurons throughout the brainstem. Barely detectable in dorsal-root ganglions.

It localises to the cell membrane. Its subcellular location is the cell projection. The protein resides in the dendrite. It catalyses the reaction K(+)(in) + chloride(in) = K(+)(out) + chloride(out). Inhibited following phosphorylation by OXSR1/OSR1 and STK39/SPAK: phosphorylation takes place downstream of WNK kinases (WNK1, WNK2, WNK3 or WNK4) in response to hyperosmotic stress and subsequent cell shrinkage. Its function is as follows. Mediates electroneutral potassium-chloride cotransport in mature neurons and is required for neuronal Cl(-) homeostasis. As major extruder of intracellular chloride, it establishes the low neuronal Cl(-) levels required for chloride influx after binding of GABA-A and glycine to their receptors, with subsequent hyperpolarization and neuronal inhibition. Involved in the regulation of dendritic spine formation and maturation. This chain is Solute carrier family 12 member 5 (Slc12a5), found in Rattus norvegicus (Rat).